Here is a 1404-residue protein sequence, read N- to C-terminus: ABC transporter G family member 47 (1404 aa).

The region spanning 156–423 is the ABC transporter 1 domain; it reads GNALHITRKK…FQSIGFKCPE (268 aa). An ATP-binding site is contributed by 189–196; that stretch reads GPPGSGKT. The 214-residue stretch at 501 to 714 folds into the ABC transmembrane type-2 1 domain; sequence ELLQANIDRE…ALNTLAVNEF (214 aa). 7 consecutive transmembrane segments (helical) span residues 519–539, 565–585, 607–627, 638–658, 663–683, 692–712, and 751–771; these read FLYI…MTVF, MIMF…PVFF, TPIS…VIGF, FLAL…IASL, VVAS…SGFI, WWIW…LAVN, and VGAL…CLIF. An ABC transporter 2 domain is found at 808–1059; that stretch reads ITFEDIKYSI…ELIRYFEAIE (252 aa). 852 to 859 lines the ATP pocket; the sequence is GVSGAGKT. Residues 1132–1346 form the ABC transmembrane type-2 2 domain; it reads TQCLACLWKQ…TLNGLVTSQF (215 aa). Helical transmembrane passes span 1152-1172, 1183-1199, 1239-1259, 1266-1286, 1298-1318, 1321-1341, and 1373-1393; these read IAVK…MFWG, LFSA…TMGV, LPYI…MIGY, FFWY…YGMM, TVVS…LIPL, IPIW…LNGL, and LLWV…FLFG.

This sequence belongs to the ABC transporter superfamily. ABCG family. PDR (TC 3.A.1.205) subfamily.

Its subcellular location is the membrane. Functionally, may be a general defense protein. This Oryza sativa subsp. japonica (Rice) protein is ABC transporter G family member 47.